A 543-amino-acid chain; its full sequence is CTP synthase (543 aa).

Residues 1-265 are amidoligase domain; that stretch reads MARFIFITGG…DSEVLRAFGI (265 aa). Position 13 (serine 13) interacts with CTP. Serine 13 is a UTP binding site. 14 to 19 contributes to the ATP binding site; sequence SLGKGL. Tyrosine 54 contacts L-glutamine. Aspartate 71 serves as a coordination point for ATP. Residues aspartate 71 and glutamate 139 each coordinate Mg(2+). CTP-binding positions include 146–148, 186–191, and lysine 222; these read DIE and KTKPTQ. Residues 186 to 191 and lysine 222 contribute to the UTP site; that span reads KTKPTQ. The 252-residue stretch at 291–542 folds into the Glutamine amidotransferase type-1 domain; that stretch reads TIGVVGKYVS…IEAAVKQSRL (252 aa). Glycine 354 is a binding site for L-glutamine. Catalysis depends on cysteine 381, which acts as the Nucleophile; for glutamine hydrolysis. Residues 382–385, glutamate 405, and arginine 470 contribute to the L-glutamine site; that span reads LGMQ. Residues histidine 515 and glutamate 517 contribute to the active site.

Belongs to the CTP synthase family. As to quaternary structure, homotetramer.

It catalyses the reaction UTP + L-glutamine + ATP + H2O = CTP + L-glutamate + ADP + phosphate + 2 H(+). The catalysed reaction is L-glutamine + H2O = L-glutamate + NH4(+). It carries out the reaction UTP + NH4(+) + ATP = CTP + ADP + phosphate + 2 H(+). It participates in pyrimidine metabolism; CTP biosynthesis via de novo pathway; CTP from UDP: step 2/2. With respect to regulation, allosterically activated by GTP, when glutamine is the substrate; GTP has no effect on the reaction when ammonia is the substrate. The allosteric effector GTP functions by stabilizing the protein conformation that binds the tetrahedral intermediate(s) formed during glutamine hydrolysis. Inhibited by the product CTP, via allosteric rather than competitive inhibition. Functionally, catalyzes the ATP-dependent amination of UTP to CTP with either L-glutamine or ammonia as the source of nitrogen. Regulates intracellular CTP levels through interactions with the four ribonucleotide triphosphates. The protein is CTP synthase of Sphingopyxis alaskensis (strain DSM 13593 / LMG 18877 / RB2256) (Sphingomonas alaskensis).